The primary structure comprises 96 residues: Protein C4 (96 aa).

Residue Gly2 is the site of N-myristoyl glycine; by host attachment. The interval 66–96 (STDDLQGEDSRQPMTLTPRQLTQDVSRRLLM) is disordered. The segment covering 77 to 89 (QPMTLTPRQLTQD) has biased composition (polar residues).

The protein belongs to the geminiviridae protein AC4/C4 family.

The protein localises to the host cell membrane. In terms of biological role, pathogenicity determinant. May act as a suppressor of RNA-mediated gene silencing, also known as post-transcriptional gene silencing (PTGS), a mechanism of plant viral defense that limits the accumulation of viral RNAs. In Solanum lycopersicum (Tomato), this protein is Protein C4.